The chain runs to 243 residues: 5'-methylthioadenosine/S-adenosylhomocysteine nucleosidase (243 aa).

Glu-12 functions as the Proton acceptor in the catalytic mechanism. Substrate contacts are provided by residues Gly-78, Met-158, and 179 to 180; that span reads ME. Catalysis depends on Asp-203, which acts as the Proton donor.

This sequence belongs to the PNP/UDP phosphorylase family. MtnN subfamily.

The catalysed reaction is S-adenosyl-L-homocysteine + H2O = S-(5-deoxy-D-ribos-5-yl)-L-homocysteine + adenine. The enzyme catalyses S-methyl-5'-thioadenosine + H2O = 5-(methylsulfanyl)-D-ribose + adenine. It carries out the reaction 5'-deoxyadenosine + H2O = 5-deoxy-D-ribose + adenine. It functions in the pathway amino-acid biosynthesis; L-methionine biosynthesis via salvage pathway; S-methyl-5-thio-alpha-D-ribose 1-phosphate from S-methyl-5'-thioadenosine (hydrolase route): step 1/2. Its function is as follows. Catalyzes the irreversible cleavage of the glycosidic bond in both 5'-methylthioadenosine (MTA) and S-adenosylhomocysteine (SAH/AdoHcy) to adenine and the corresponding thioribose, 5'-methylthioribose and S-ribosylhomocysteine, respectively. Also cleaves 5'-deoxyadenosine, a toxic by-product of radical S-adenosylmethionine (SAM) enzymes, into 5-deoxyribose and adenine. This Colwellia psychrerythraea (strain 34H / ATCC BAA-681) (Vibrio psychroerythus) protein is 5'-methylthioadenosine/S-adenosylhomocysteine nucleosidase.